The following is a 132-amino-acid chain: Small ribosomal subunit protein uS11 (132 aa).

This sequence belongs to the universal ribosomal protein uS11 family. Part of the 30S ribosomal subunit. Interacts with proteins S7 and S18. Binds to IF-3.

In terms of biological role, located on the platform of the 30S subunit, it bridges several disparate RNA helices of the 16S rRNA. Forms part of the Shine-Dalgarno cleft in the 70S ribosome. This Legionella pneumophila (strain Corby) protein is Small ribosomal subunit protein uS11.